Consider the following 440-residue polypeptide: Transposon Ty1-ER2 Gag polyprotein (440 aa).

Composition is skewed to polar residues over residues 1–10 (MESQQLSNYP), 48–60 (TKAN…TPAS), and 127–152 (QSQF…GNTF). 3 disordered regions span residues 1 to 93 (MESQ…MMTQ), 126 to 173 (PQSQ…RPPP), and 352 to 440 (GSRN…PETY). The segment covering 153 to 165 (TDSSSADSDMTST) has biased composition (low complexity). The tract at residues 299–401 (NNGIHINNKV…NSKSKTARAH (103 aa)) is RNA-binding. Residues 402–418 (NVSTSNNSPSTDNDSIS) show a composition bias toward low complexity. Ser-416 carries the phosphoserine modification. Polar residues predominate over residues 419–428 (KSTTEPIQLN). Basic and acidic residues predominate over residues 429 to 440 (NKHDLHLRPETY).

In terms of assembly, homotrimer.

It is found in the cytoplasm. Capsid protein (CA) is the structural component of the virus-like particle (VLP), forming the shell that encapsulates the retrotransposons dimeric RNA genome. The particles are assembled from trimer-clustered units and there are holes in the capsid shells that allow for the diffusion of macromolecules. CA also has nucleocapsid-like chaperone activity, promoting primer tRNA(i)-Met annealing to the multipartite primer-binding site (PBS), dimerization of Ty1 RNA and initiation of reverse transcription. In Saccharomyces cerevisiae (strain ATCC 204508 / S288c) (Baker's yeast), this protein is Transposon Ty1-ER2 Gag polyprotein (TY1A-ER2).